The chain runs to 211 residues: Ribosomal RNA small subunit methyltransferase G (211 aa).

Residues Gly73, Phe78, 124–125 (VE), and Arg137 each bind S-adenosyl-L-methionine.

Belongs to the methyltransferase superfamily. RNA methyltransferase RsmG family.

The protein resides in the cytoplasm. Specifically methylates the N7 position of a guanine in 16S rRNA. The sequence is that of Ribosomal RNA small subunit methyltransferase G from Christiangramia forsetii (strain DSM 17595 / CGMCC 1.15422 / KT0803) (Gramella forsetii).